Consider the following 262-residue polypeptide: Zinc import ATP-binding protein ZnuC (262 aa).

One can recognise an ABC transporter domain in the interval 4 to 220 (LNLSGVRLSH…PEYLALFGPR (217 aa)). 36-43 (GPNGAGKS) serves as a coordination point for ATP. The interval 238–262 (ADGSVLPLAEGGGEPHTHGPGCRHG) is disordered.

The protein belongs to the ABC transporter superfamily. Zinc importer (TC 3.A.1.15.5) family. As to quaternary structure, the complex is composed of two ATP-binding proteins (ZnuC), two transmembrane proteins (ZnuB) and a solute-binding protein (ZnuA).

It is found in the cell inner membrane. It catalyses the reaction Zn(2+)(out) + ATP(in) + H2O(in) = Zn(2+)(in) + ADP(in) + phosphate(in) + H(+)(in). In terms of biological role, part of the ABC transporter complex ZnuABC involved in zinc import. Responsible for energy coupling to the transport system. In Paramagnetospirillum magneticum (strain ATCC 700264 / AMB-1) (Magnetospirillum magneticum), this protein is Zinc import ATP-binding protein ZnuC.